The chain runs to 166 residues: Photosystem I assembly protein Ycf3 (166 aa).

TPR repeat units lie at residues 35 to 68, 72 to 105, and 120 to 153; these read AFTY…EIDP, SYIL…NPSL, and GEQA…APTN.

It belongs to the Ycf3 family.

Its subcellular location is the plastid. The protein resides in the chloroplast thylakoid membrane. In terms of biological role, essential for the assembly of the photosystem I (PSI) complex. May act as a chaperone-like factor to guide the assembly of the PSI subunits. The protein is Photosystem I assembly protein Ycf3 of Oltmannsiellopsis viridis (Marine flagellate).